Consider the following 372-residue polypeptide: B2 bradykinin receptor (372 aa).

The Extracellular segment spans residues 1–34 (MFNITSQVSALNATLAQGNSCLDAEWWSWLNTIQ). Asparagine 3 and asparagine 12 each carry an N-linked (GlcNAc...) asparagine glycan. A helical membrane pass occupies residues 35 to 58 (APFLWVLFVLAVLENIFVLSVFFL). The Cytoplasmic segment spans residues 59–67 (HKSSCTVAE). The helical transmembrane segment at 68–92 (IYLGNLAVADLILAFGLPFWAITIA) threads the bilayer. The Extracellular portion of the chain corresponds to 93–105 (NNFDWLFGEVLCR). Cysteine 104 and cysteine 185 are disulfide-bonded. Residues 106–127 (MVNTMIQMNMYSSICFLMLVSI) form a helical membrane-spanning segment. The Cytoplasmic portion of the chain corresponds to 128–149 (DRYLALVKTMSMGRMRGVRWAK). Tyrosine 130 bears the Phosphotyrosine mark. A helical membrane pass occupies residues 150–172 (LYSLVIWGCALLLSSPMLVFRTM). Topologically, residues 173–195 (KDYRDEGHNVTACLIIYPSLTWQ) are extracellular. N-linked (GlcNAc...) asparagine glycosylation is present at asparagine 181. Residues 196-222 (VFTNVLLNLVGFLLPLSIITFCTVQIM) form a helical membrane-spanning segment. Topologically, residues 223–241 (QVLRNNEMQKFKEIQTERR) are cytoplasmic. Residues 242–266 (ATVLVLAVLLLFVVCWLPFQIGTFL) form a helical membrane-spanning segment. Topologically, residues 267–284 (DTLRLLGFLPGCWEHVID) are extracellular. The helical transmembrane segment at 285–308 (LITQISSYLAYSNSCLNPLVYVIV) threads the bilayer. Residues 309–364 (GKRFRKKSREVYHGLCRSGGCVSEPAQSENSMGTLRTSISVDRQIHKLQDWARSSS) lie on the Cytoplasmic side of the membrane. Tyrosine 320 bears the Phosphotyrosine mark. Cysteine 324 carries the S-palmitoyl cysteine lipid modification. Position 339 is a phosphoserine (serine 339). Residue threonine 342 is modified to Phosphothreonine. Phosphoserine; by GRK6 is present on residues serine 346 and serine 348.

It belongs to the G-protein coupled receptor 1 family. Bradykinin receptor subfamily. BDKRB2 sub-subfamily. Forms a complex with PECAM1 and GNAQ. Interacts with PECAM1.

It localises to the cell membrane. In terms of biological role, receptor for bradykinin. It is associated with G proteins that activate a phosphatidylinositol-calcium second messenger system. The chain is B2 bradykinin receptor (BDKRB2) from Cavia porcellus (Guinea pig).